Reading from the N-terminus, the 110-residue chain is Large ribosomal subunit protein uL22 (110 aa).

Belongs to the universal ribosomal protein uL22 family. As to quaternary structure, part of the 50S ribosomal subunit.

In terms of biological role, this protein binds specifically to 23S rRNA; its binding is stimulated by other ribosomal proteins, e.g. L4, L17, and L20. It is important during the early stages of 50S assembly. It makes multiple contacts with different domains of the 23S rRNA in the assembled 50S subunit and ribosome. Its function is as follows. The globular domain of the protein is located near the polypeptide exit tunnel on the outside of the subunit, while an extended beta-hairpin is found that lines the wall of the exit tunnel in the center of the 70S ribosome. In Baumannia cicadellinicola subsp. Homalodisca coagulata, this protein is Large ribosomal subunit protein uL22.